Reading from the N-terminus, the 263-residue chain is Leukocyte-associated immunoglobulin-like receptor 1 (263 aa).

A signal peptide spans methionine 1–threonine 21. The Extracellular portion of the chain corresponds to glutamine 22–tyrosine 144. One can recognise an Ig-like C2-type domain in the interval proline 27–glutamate 115. Residues asparagine 34 and asparagine 90 are each glycosylated (N-linked (GlcNAc...) asparagine). A disulfide bridge links cysteine 49 with cysteine 99. Residues isoleucine 145–leucine 165 traverse the membrane as a helical segment. Topologically, residues arginine 166 to histidine 263 are cytoplasmic. Short sequence motifs (ITIM motif) lie at residues valine 226–leucine 231 and serine 255–isoleucine 260. Phosphotyrosine occurs at positions 228 and 257.

As to quaternary structure, interacts with SH2 domains of tyrosine-protein phosphatases PTPN6 and PTPN11. The interaction with PTPN6 is constitutive. Interacts with the SH2 domain of CSK. Binds with high affinity to extracellular matrix collagens, the interaction is functionally important. Post-translationally, phosphorylation at Tyr-228 and Tyr-257 activates it. May be phosphorylated by LCK. N-glycosylated. As to expression, expressed in lymphoid organs and in cell lines of hemopoietic origin.

Its subcellular location is the cell membrane. In terms of biological role, functions as an inhibitory receptor that plays a constitutive negative regulatory role on cytolytic function of natural killer (NK) cells, B-cells and T-cells. Activation by Tyr phosphorylation results in recruitment and activation of the phosphatases PTPN6 and PTPN11. It also reduces the increase of intracellular calcium evoked by B-cell receptor ligation. May also play its inhibitory role independently of SH2-containing phosphatases. Modulates cytokine production in CD4+ T-cells, down-regulating IL2 and IFNG production while inducing secretion of transforming growth factor beta. Also down-regulates IgG and IgE production in B-cells as well as IL8, IL10 and TNF secretion. Inhibits proliferation and induces apoptosis in myeloid leukemia cell lines as well as prevents nuclear translocation of NF-kappa-B p65 subunit/RELA and phosphorylation of I-kappa-B alpha/CHUK in these cells. Inhibits the differentiation of peripheral blood precursors towards dendritic cells. The protein is Leukocyte-associated immunoglobulin-like receptor 1 (Lair1) of Mus musculus (Mouse).